A 401-amino-acid chain; its full sequence is Elongation factor Tu 2 (401 aa).

Positions 10–209 (KPHVNVGTIG…AVDEYIPTPV (200 aa)) constitute a tr-type G domain. The G1 stretch occupies residues 19–26 (GHVDHGKT). 19–26 (GHVDHGKT) provides a ligand contact to GTP. Residue Thr26 participates in Mg(2+) binding. Residues 60–64 (GITIA) form a G2 region. The G3 stretch occupies residues 81 to 84 (DCPG). GTP contacts are provided by residues 81-85 (DCPGH) and 136-139 (NKVD). A G4 region spans residues 136–139 (NKVD). Positions 174 to 176 (SAL) are G5.

Belongs to the TRAFAC class translation factor GTPase superfamily. Classic translation factor GTPase family. EF-Tu/EF-1A subfamily. As to quaternary structure, monomer.

The protein localises to the cytoplasm. The enzyme catalyses GTP + H2O = GDP + phosphate + H(+). Functionally, GTP hydrolase that promotes the GTP-dependent binding of aminoacyl-tRNA to the A-site of ribosomes during protein biosynthesis. This is Elongation factor Tu 2 from Roseiflexus castenholzii (strain DSM 13941 / HLO8).